The chain runs to 383 residues: 8-amino-7-oxononanoate synthase (383 aa).

Arg-22 contributes to the substrate binding site. Pyridoxal 5'-phosphate is bound at residue 109 to 110; it reads GF. His-134 is a binding site for substrate. Pyridoxal 5'-phosphate-binding residues include Ser-178, His-206, and Thr-232. Residue Lys-235 is modified to N6-(pyridoxal phosphate)lysine. Thr-348 is a substrate binding site.

This sequence belongs to the class-II pyridoxal-phosphate-dependent aminotransferase family. BioF subfamily. In terms of assembly, homodimer. Requires pyridoxal 5'-phosphate as cofactor.

The catalysed reaction is 6-carboxyhexanoyl-[ACP] + L-alanine + H(+) = (8S)-8-amino-7-oxononanoate + holo-[ACP] + CO2. It functions in the pathway cofactor biosynthesis; biotin biosynthesis. Catalyzes the decarboxylative condensation of pimeloyl-[acyl-carrier protein] and L-alanine to produce 8-amino-7-oxononanoate (AON), [acyl-carrier protein], and carbon dioxide. The polypeptide is 8-amino-7-oxononanoate synthase (Vibrio campbellii (strain ATCC BAA-1116)).